The following is a 226-amino-acid chain: NEDD8-specific protease 1 (226 aa).

Belongs to the peptidase C48 family.

In terms of biological role, processes the pre-form of the ubiquitin-like protein NEDD8/RUB1. Has the capacity to discriminate between NEDD8/RUB1 and ubiquitin. Has no SUMO protease activity. This is NEDD8-specific protease 1 (NEDP1) from Arabidopsis thaliana (Mouse-ear cress).